A 250-amino-acid polypeptide reads, in one-letter code: UPF0259 membrane protein SG1383 (250 aa).

6 helical membrane passes run 20 to 40 (FASI…LGHA), 86 to 106 (AGTL…LTMI), 121 to 141 (IGLS…TTLL), 146 to 166 (LLLI…APVI), 191 to 211 (LLAP…LLAT), and 219 to 239 (LVAV…LLIY).

The protein belongs to the UPF0259 family.

The protein resides in the cell inner membrane. This chain is UPF0259 membrane protein SG1383, found in Sodalis glossinidius (strain morsitans).